A 421-amino-acid chain; its full sequence is Core protease I7 homolog (421 aa).

Residues His242, Asp249, and Cys329 contribute to the active site.

This sequence belongs to the peptidase C57 family.

Its subcellular location is the virion. Late protein responsible for processing most or all of the viral core and membrane proteins known to undergo morphogenesis-associated proteolysis. These proteolytic events are involved in the transformation of immature virions (IV) into mature virions (MV). The polypeptide is Core protease I7 homolog (Fowlpox virus (strain NVSL) (FPV)).